Here is a 246-residue protein sequence, read N- to C-terminus: Chloroplastic group IIB intron splicing facilitator CRS2-A, chloroplastic (246 aa).

The N-terminal 34 residues, 1 to 34 (MFCASSSPITSPLYPKAYKFSQTKSNSKRFSSLR), are a transit peptide targeting the chloroplast. Tyr64 contacts tRNA. His69 serves as the catalytic Proton acceptor. Residues Tyr114, Asn116, and Asn162 each contribute to the tRNA site.

It belongs to the PTH family. CRS2 subfamily. Part of large ribonucleo-protein complexes that include group IIB introns and either CAF1 or CAF2.

The protein localises to the plastid. Its subcellular location is the chloroplast stroma. Required for the splicing of group IIB introns in chloroplasts. The chain is Chloroplastic group IIB intron splicing facilitator CRS2-A, chloroplastic (CRS2A) from Arabidopsis thaliana (Mouse-ear cress).